The chain runs to 112 residues: cAMP-regulated phosphoprotein 19 (112 aa).

Positions 1–11 are enriched in low complexity; it reads MSAESPEPASA. Positions 1–48 are disordered; that stretch reads MSAESPEPASAEEQKEMEDKVISPEKAEEAKLKARYPHLGQKPGGSDF. At S2 the chain carries N-acetylserine. A compositionally biased stretch (basic and acidic residues) spans 12 to 32; sequence EEQKEMEDKVISPEKAEEAKL. S62 and S104 each carry phosphoserine; by GWL. The disordered stretch occupies residues 73 to 112; it reads KNKQLPTAAPDKTEVTGDHIPTPQDLPQRKPSLVASKLAG. S104 carries the phosphoserine; by PKA modification.

Belongs to the endosulfine family. Interacts (when phosphorylated at Ser-62) with PPP2R2D. Phosphorylation at Ser-62 by MASTL/GWL during mitosis is essential for interaction with PPP2R2D (PR55-delta) and subsequent inactivation of PP2A.

The protein resides in the cytoplasm. In terms of biological role, protein phosphatase inhibitor that specifically inhibits protein phosphatase 2A (PP2A) during mitosis. Inhibition of PP2A is enhanced when ARPP19 is phosphorylated. When phosphorylated at Ser-62 during mitosis, specifically interacts with PPP2R2D (PR55-delta) and inhibits its activity, leading to inactivation of PP2A, an essential condition to keep cyclin-B1-CDK1 activity high during M phase. The polypeptide is cAMP-regulated phosphoprotein 19 (ARPP19) (Gallus gallus (Chicken)).